A 452-amino-acid polypeptide reads, in one-letter code: Protein CLT3, chloroplastic (452 aa).

A chloroplast-targeting transit peptide spans 1-34; it reads MATTSRRFTTGLFASITSVKSHSANRPQSISLIR. 10 consecutive transmembrane segments (helical) span residues 105 to 125, 137 to 157, 175 to 195, 202 to 222, 230 to 250, 258 to 278, 307 to 327, 353 to 373, 389 to 409, and 412 to 432; these read AEIV…RVMY, FFLA…ILYF, PFLI…AAAA, TTVL…IFLG, ILGC…GSGA, GVLW…GTVL, FQAI…GIPF, GAPF…IALL, TVSV…LGVA, and LPKG…LYSW.

This sequence belongs to the CRT-like transporter family.

Its subcellular location is the plastid. The protein localises to the chloroplast membrane. In terms of biological role, involved in thiol transport from the plastid to the cytosol. Transports probably both glutathione (GSH) and its precursor, gamma-glutamylcysteine (gamma-EC). Exhibits some functional redundancy with CLT1 in maintaining the root GSH pool. This is Protein CLT3, chloroplastic from Arabidopsis thaliana (Mouse-ear cress).